Here is a 167-residue protein sequence, read N- to C-terminus: Putative peroxiredoxin-B (167 aa).

The Thioredoxin domain occupies 4–167; sequence IKRGDRFPTT…STAQKIIAKL (164 aa). The Cysteine sulfenic acid (-SOH) intermediate role is filled by Cys-53. The Microbody targeting signal signature appears at 165-167; it reads AKL.

The protein belongs to the peroxiredoxin family. Prx5 subfamily.

Its subcellular location is the peroxisome membrane. The catalysed reaction is a hydroperoxide + [thioredoxin]-dithiol = an alcohol + [thioredoxin]-disulfide + H2O. Its function is as follows. Thiol-specific peroxidase that catalyzes the reduction of hydrogen peroxide and organic hydroperoxides to water and alcohols, respectively. Plays a role in cell protection against oxidative stress by detoxifying peroxides and as sensor of hydrogen peroxide-mediated signaling events. The sequence is that of Putative peroxiredoxin-B (PMPB) from Candida boidinii (Yeast).